Here is a 197-residue protein sequence, read N- to C-terminus: UPF0314 protein NGR_c32320 (197 aa).

3 helical membrane-spanning segments follow: residues Trp16–Met36, Trp66–Leu86, and Leu152–Ile172.

The protein belongs to the UPF0314 family.

It is found in the cell membrane. The chain is UPF0314 protein NGR_c32320 from Sinorhizobium fredii (strain NBRC 101917 / NGR234).